The chain runs to 464 residues: Siroheme synthase (464 aa).

Positions 1 to 203 (MDYLPLFHNL…GQETEAERLL (203 aa)) are precorrin-2 dehydrogenase /sirohydrochlorin ferrochelatase. Residues 22-23 (EI) and 43-44 (PQ) each bind NAD(+). At S128 the chain carries Phosphoserine. Residues 216–464 (GEVYLVGAGP…AWFEGRQSAD (249 aa)) are uroporphyrinogen-III C-methyltransferase. P225 is a binding site for S-adenosyl-L-methionine. D248 acts as the Proton acceptor in catalysis. K270 acts as the Proton donor in catalysis. Residues 301–303 (GGD), I306, 331–332 (TA), M383, and G412 contribute to the S-adenosyl-L-methionine site.

The protein in the N-terminal section; belongs to the precorrin-2 dehydrogenase / sirohydrochlorin ferrochelatase family. It in the C-terminal section; belongs to the precorrin methyltransferase family.

The catalysed reaction is uroporphyrinogen III + 2 S-adenosyl-L-methionine = precorrin-2 + 2 S-adenosyl-L-homocysteine + H(+). It carries out the reaction precorrin-2 + NAD(+) = sirohydrochlorin + NADH + 2 H(+). It catalyses the reaction siroheme + 2 H(+) = sirohydrochlorin + Fe(2+). It functions in the pathway cofactor biosynthesis; adenosylcobalamin biosynthesis; precorrin-2 from uroporphyrinogen III: step 1/1. Its pathway is cofactor biosynthesis; adenosylcobalamin biosynthesis; sirohydrochlorin from precorrin-2: step 1/1. The protein operates within porphyrin-containing compound metabolism; siroheme biosynthesis; precorrin-2 from uroporphyrinogen III: step 1/1. It participates in porphyrin-containing compound metabolism; siroheme biosynthesis; siroheme from sirohydrochlorin: step 1/1. It functions in the pathway porphyrin-containing compound metabolism; siroheme biosynthesis; sirohydrochlorin from precorrin-2: step 1/1. Functionally, multifunctional enzyme that catalyzes the SAM-dependent methylations of uroporphyrinogen III at position C-2 and C-7 to form precorrin-2 via precorrin-1. Then it catalyzes the NAD-dependent ring dehydrogenation of precorrin-2 to yield sirohydrochlorin. Finally, it catalyzes the ferrochelation of sirohydrochlorin to yield siroheme. The polypeptide is Siroheme synthase (Azotobacter vinelandii (strain DJ / ATCC BAA-1303)).